The chain runs to 611 residues: Chaperonin 60 subunit beta 4, chloroplastic (611 aa).

Residues 1–37 (MAFSQAALSALPLSDRTFRKKPSSSSSSSPNFVLRVR) constitute a chloroplast transit peptide. Positions 377–480 (QKAVDERVSQ…LDNTEQKIGA (104 aa)) form a coiled coil. Residues 574 to 595 (INPPLPTSSPATSSMFPDRKLP) are disordered.

Belongs to the chaperonin (HSP60) family. Part of the Cpn60 complex composed of 7 alpha and 7 beta subunits. Can also form a complex composed of 14 beta subunits only. Both complexes show ATPase activity. The Cpn60 complex interacts with the Cpn10 complex. Interacts with NDHH.

Its subcellular location is the plastid. The protein resides in the chloroplast stroma. In terms of biological role, involved specifically in the folding of NDHH, a subunit of the chloroplast NADH dehydrogenase-like complex (NDH). The sequence is that of Chaperonin 60 subunit beta 4, chloroplastic (CPN60B4) from Arabidopsis thaliana (Mouse-ear cress).